Consider the following 744-residue polypeptide: Cell division cycle protein 27 homolog B (744 aa).

A TPR 1 repeat occupies 101 to 134 (AAGHYLLGLIYKYTDRRKNAAQQFKQSLTIDPLL). Residues 180–199 (NEERNSTSTKNTSSEDYSPR) are compositionally biased toward polar residues. 2 disordered regions span residues 180 to 218 (NEER…NFHS) and 359 to 390 (ENMD…NDQE). A compositionally biased stretch (basic and acidic residues) spans 363 to 374 (EGVRGEPFDDSR). The span at 375 to 387 (PNTASTTGSMASN) shows a compositional bias: polar residues. TPR repeat units follow at residues 450-483 (GWVL…SPYC), 518-551 (PQSW…NPRF), 553-585 (YAHT…DTRH), 587-619 (NAWY…NPSS), 621-653 (VIMS…DRKN), 655-687 (LPMY…APSE), and 688-721 (SSVY…KPPA).

It belongs to the APC3/CDC27 family. The APC/C is composed of at least 10 subunits. Can homodimerize. Interacts with APC2, APC10, FZR2 and FZR3. Interacts with PANS1. Interacts with SAMBA. As to expression, specifically expressed in dividing and elongating cells.

It is found in the nucleus. It functions in the pathway protein modification; protein ubiquitination. Functionally, component of the anaphase promoting complex/cyclosome (APC/C), a cell cycle-regulated E3 ubiquitin-protein ligase complex that controls progression through mitosis and the G1 phase of the cell cycle. The APC/C complex controls several key steps in the cell cycle by mediating ubiquitination and subsequent degradation of target proteins such as cyclins. The APC/C complex is required for the female gametophyte development and is involved in several aspect of development by controlling cell division and cell elongation. Involved in the control of endoreduplication. Functionally redundant with CDC27A in the control of gametophyte development. In Arabidopsis thaliana (Mouse-ear cress), this protein is Cell division cycle protein 27 homolog B (CDC27B).